We begin with the raw amino-acid sequence, 837 residues long: Protein ROD1 (837 aa).

Residues serine 138 and serine 141 each carry the phosphoserine modification. Lysine 401 participates in a covalent cross-link: Glycyl lysine isopeptide (Lys-Gly) (interchain with G-Cter in ubiquitin). At serine 436 the chain carries Phosphoserine. The PY-motif signature appears at 487 to 490 (PPNY). At serine 536 the chain carries Phosphoserine. The short motif at 656–659 (PPAY) is the PY-motif element. 2 disordered regions span residues 675–726 (ERPQ…SVSL) and 763–837 (SFTS…RDRS). Residues 685-703 (TSSLLPLPGSSKSSNNLKR) show a composition bias toward low complexity. The segment covering 716–726 (PRNNSGSSVSL) has biased composition (polar residues). Phosphoserine occurs at positions 720 and 725. A compositionally biased stretch (low complexity) spans 763–773 (SFTSNSSSKNN). Positions 774–792 (SHFDKTDSTSDANKPREEE) are enriched in basic and acidic residues. Residues 805–815 (SSSVRSNNSNS) show a composition bias toward low complexity.

The protein belongs to the arrestin family. As to quaternary structure, interacts with RSP5 via its 2 PY-motifs.

The protein resides in the membrane. Its function is as follows. Mediates resistance to o-dinitrobenzene, calcium and zinc. This Saccharomyces cerevisiae (strain ATCC 204508 / S288c) (Baker's yeast) protein is Protein ROD1 (ROD1).